A 410-amino-acid chain; its full sequence is Phosphoglycerate kinase (410 aa).

Residues 24–26 (DLN), Arg-40, 63–66 (HLGR), Arg-122, and Arg-162 contribute to the substrate site. ATP-binding positions include Lys-212, Gly-300, Glu-331, and 360 to 363 (GGDS).

It belongs to the phosphoglycerate kinase family. In terms of assembly, monomer.

The protein localises to the cytoplasm. It catalyses the reaction (2R)-3-phosphoglycerate + ATP = (2R)-3-phospho-glyceroyl phosphate + ADP. The protein operates within carbohydrate degradation; glycolysis; pyruvate from D-glyceraldehyde 3-phosphate: step 2/5. This chain is Phosphoglycerate kinase, found in Nocardia farcinica (strain IFM 10152).